Here is a 152-residue protein sequence, read N- to C-terminus: UPF0260 protein BR1477/BS1330_I1471 (152 aa).

It belongs to the UPF0260 family.

This chain is UPF0260 protein BR1477/BS1330_I1471, found in Brucella suis biovar 1 (strain 1330).